A 148-amino-acid polypeptide reads, in one-letter code: Deoxyuridine 5'-triphosphate nucleotidohydrolase (148 aa).

Substrate contacts are provided by residues 67–69, Asn80, 84–86, and Met94; these read RSG and LID.

This sequence belongs to the dUTPase family. Requires Mg(2+) as cofactor.

The enzyme catalyses dUTP + H2O = dUMP + diphosphate + H(+). The protein operates within pyrimidine metabolism; dUMP biosynthesis; dUMP from dCTP (dUTP route): step 2/2. Its function is as follows. This enzyme is involved in nucleotide metabolism: it produces dUMP, the immediate precursor of thymidine nucleotides and it decreases the intracellular concentration of dUTP so that uracil cannot be incorporated into DNA. The polypeptide is Deoxyuridine 5'-triphosphate nucleotidohydrolase (Burkholderia ambifaria (strain ATCC BAA-244 / DSM 16087 / CCUG 44356 / LMG 19182 / AMMD) (Burkholderia cepacia (strain AMMD))).